Here is a 158-residue protein sequence, read N- to C-terminus: 2-C-methyl-D-erythritol 2,4-cyclodiphosphate synthase (158 aa).

Residues Asp-9 and His-11 each contribute to the a divalent metal cation site. 4-CDP-2-C-methyl-D-erythritol 2-phosphate-binding positions include 9–11 and 35–36; these read DVH and HS. His-43 contributes to the a divalent metal cation binding site. Residues 57 to 59, 62 to 66, 101 to 107, 133 to 136, Phe-140, and Arg-143 each bind 4-CDP-2-C-methyl-D-erythritol 2-phosphate; these read DIG, FPDTD, AQAPKMA, and TTTE.

The protein belongs to the IspF family. As to quaternary structure, homotrimer. A divalent metal cation serves as cofactor.

The catalysed reaction is 4-CDP-2-C-methyl-D-erythritol 2-phosphate = 2-C-methyl-D-erythritol 2,4-cyclic diphosphate + CMP. It participates in isoprenoid biosynthesis; isopentenyl diphosphate biosynthesis via DXP pathway; isopentenyl diphosphate from 1-deoxy-D-xylulose 5-phosphate: step 4/6. Functionally, involved in the biosynthesis of isopentenyl diphosphate (IPP) and dimethylallyl diphosphate (DMAPP), two major building blocks of isoprenoid compounds. Catalyzes the conversion of 4-diphosphocytidyl-2-C-methyl-D-erythritol 2-phosphate (CDP-ME2P) to 2-C-methyl-D-erythritol 2,4-cyclodiphosphate (ME-CPP) with a corresponding release of cytidine 5-monophosphate (CMP). The sequence is that of 2-C-methyl-D-erythritol 2,4-cyclodiphosphate synthase from Vibrio vulnificus (strain CMCP6).